The primary structure comprises 286 residues: Glycine--tRNA ligase alpha subunit (286 aa).

The protein belongs to the class-II aminoacyl-tRNA synthetase family. In terms of assembly, tetramer of two alpha and two beta subunits.

It is found in the cytoplasm. It catalyses the reaction tRNA(Gly) + glycine + ATP = glycyl-tRNA(Gly) + AMP + diphosphate. This Thermotoga petrophila (strain ATCC BAA-488 / DSM 13995 / JCM 10881 / RKU-1) protein is Glycine--tRNA ligase alpha subunit.